The primary structure comprises 647 residues: Pumilio homolog 3 (647 aa).

Positions 1-10 (MEVKGKKKIT) are enriched in basic residues. Residues 1–123 (MEVKGKKKIT…KKKKELKQNR (123 aa)) are disordered. Lys-33 is modified (N6-acetyllysine). Basic residues predominate over residues 59–68 (PGKKRVKQFK). A compositionally biased stretch (basic and acidic residues) spans 93-123 (FQPDGKSDESAAKKPKWDDFKKKKKELKQNR). The short motif at 105 to 117 (KKPKWDDFKKKKK) is the Nuclear localization signal element. The 368-residue stretch at 142-509 (ESLRRKDCDK…VVLDKSVCVL (368 aa)) folds into the PUM-HD domain. Pumilio repeat units lie at residues 176–211 (HDST…LSKA), 212–247 (KYSR…MLRH), 248–276 (SEAS…ELYG), 288–324 (PTLE…VIKH), 325–360 (SLVH…LAHT), 361–396 (HDGA…IANG), 397–434 (QYSH…IVND), 435–503 (KYGR…VVLD), 504–550 (KSVC…IAEH), 551–595 (PAGH…WASI), and 596–635 (NRGA…KSTS).

In terms of assembly, interacts with PARP1 (via catalytic domain).

It localises to the nucleus. Its subcellular location is the nucleolus. The protein resides in the nucleoplasm. The protein localises to the chromosome. In terms of biological role, inhibits the poly(ADP-ribosyl)ation activity of PARP1 and the degradation of PARP1 by CASP3 following genotoxic stress. Binds to double-stranded RNA or DNA without sequence specificity. Involved in development of the eye and of primordial germ cells. The protein is Pumilio homolog 3 of Rattus norvegicus (Rat).